A 296-amino-acid polypeptide reads, in one-letter code: tRNA uridine(34) hydroxylase (296 aa).

The Rhodanese domain occupies 132 to 226; it reads AGRPVVMLDT…YFEEVGGAHY (95 aa). Residue C186 is the Cysteine persulfide intermediate of the active site.

This sequence belongs to the TrhO family.

It carries out the reaction uridine(34) in tRNA + AH2 + O2 = 5-hydroxyuridine(34) in tRNA + A + H2O. Catalyzes oxygen-dependent 5-hydroxyuridine (ho5U) modification at position 34 in tRNAs. In Burkholderia thailandensis (strain ATCC 700388 / DSM 13276 / CCUG 48851 / CIP 106301 / E264), this protein is tRNA uridine(34) hydroxylase.